A 354-amino-acid chain; its full sequence is Protein RecA (354 aa).

Gly-67 to Thr-74 is a binding site for ATP.

This sequence belongs to the RecA family.

Its subcellular location is the cytoplasm. Functionally, can catalyze the hydrolysis of ATP in the presence of single-stranded DNA, the ATP-dependent uptake of single-stranded DNA by duplex DNA, and the ATP-dependent hybridization of homologous single-stranded DNAs. It interacts with LexA causing its activation and leading to its autocatalytic cleavage. This Haemophilus influenzae (strain 86-028NP) protein is Protein RecA.